The following is a 330-amino-acid chain: Cytoskeleton protein RodZ (330 aa).

The Cytoplasmic portion of the chain corresponds to 1-111 (MNTEATQDHQ…LGKRRKKRDG (111 aa)). The HTH cro/C1-type domain occupies 19–71 (LRHAREQLGLSQQAVAERLCLKVSTVRDIEDDKAPADLASTFLRGYIRSYARL). The H-T-H motif DNA-binding region spans 30–49 (QQAVAERLCLKVSTVRDIED). Residues 112–132 (WLMSFTWLVLFVVIGLSGAWW) traverse the membrane as a helical; Signal-anchor for type II membrane protein segment. Residues 133–330 (WQDHKAQQEE…TLNAEQSPAQ (198 aa)) lie on the Periplasmic side of the membrane. Residues 146-166 (MADQSSAELNGGDANSQNVPL) show a composition bias toward polar residues. The interval 146 to 237 (MADQSSAELN…ASPLPTDQAN (92 aa)) is disordered. 2 stretches are compositionally biased toward low complexity: residues 176–202 (TDSAANSAPTDTASTPTTSAPAQTPAD) and 216–233 (TAGTAPTTPATPASPLPT).

Belongs to the RodZ family.

The protein resides in the cell inner membrane. Functionally, cytoskeletal protein that is involved in cell-shape control through regulation of the length of the long axis. The polypeptide is Cytoskeleton protein RodZ (Klebsiella pneumoniae (strain 342)).